The sequence spans 423 residues: Putative transmembrane protein ORF103 (423 aa).

Basic and acidic residues predominate over residues glutamate 43–valine 57. The interval glutamate 43 to arginine 91 is disordered. Residues lysine 67–glutamate 84 show a composition bias toward acidic residues. 2 helical membrane-spanning segments follow: residues isoleucine 125–leucine 145 and phenylalanine 162–isoleucine 182. The segment at aspartate 253 to lysine 282 is disordered. Transmembrane regions (helical) follow at residues leucine 326 to serine 346 and isoleucine 366 to leucine 386.

It is found in the host membrane. In Magallana gigas (Pacific oyster), this protein is Putative transmembrane protein ORF103.